The sequence spans 309 residues: Aspartate carbamoyltransferase catalytic subunit (309 aa).

Residues Arg57 and Thr58 each coordinate carbamoyl phosphate. Lys86 is a binding site for L-aspartate. Carbamoyl phosphate-binding residues include Arg107, His135, and Gln138. The L-aspartate site is built by Arg168 and Arg228. Leu267 and Pro268 together coordinate carbamoyl phosphate.

This sequence belongs to the aspartate/ornithine carbamoyltransferase superfamily. ATCase family. In terms of assembly, heterooligomer of catalytic and regulatory chains.

The enzyme catalyses carbamoyl phosphate + L-aspartate = N-carbamoyl-L-aspartate + phosphate + H(+). It participates in pyrimidine metabolism; UMP biosynthesis via de novo pathway; (S)-dihydroorotate from bicarbonate: step 2/3. In terms of biological role, catalyzes the condensation of carbamoyl phosphate and aspartate to form carbamoyl aspartate and inorganic phosphate, the committed step in the de novo pyrimidine nucleotide biosynthesis pathway. This Cenarchaeum symbiosum (strain A) protein is Aspartate carbamoyltransferase catalytic subunit.